Reading from the N-terminus, the 240-residue chain is Ribonuclease HII (240 aa).

Residues 21-210 enclose the RNase H type-2 domain; sequence GLVAGVDEAG…VAAAVQRTVV (190 aa). Aspartate 27, glutamate 28, and aspartate 119 together coordinate a divalent metal cation.

This sequence belongs to the RNase HII family. The cofactor is Mn(2+). Mg(2+) is required as a cofactor.

The protein localises to the cytoplasm. The catalysed reaction is Endonucleolytic cleavage to 5'-phosphomonoester.. Functionally, endonuclease that specifically degrades the RNA of RNA-DNA hybrids. This chain is Ribonuclease HII, found in Paracidovorax citrulli (strain AAC00-1) (Acidovorax citrulli).